A 198-amino-acid polypeptide reads, in one-letter code: Probable GTP-binding protein EngB (198 aa).

In terms of domain architecture, EngB-type G spans 21 to 195 (NIPEVCFVGR…YDALIRLLEV (175 aa)). GTP is bound by residues 29–36 (GRSNVGKS), 56–60 (GKTRL), 75–78 (DAPG), 142–145 (TKLD), and 174–176 (VSN). The Mg(2+) site is built by S36 and T58.

This sequence belongs to the TRAFAC class TrmE-Era-EngA-EngB-Septin-like GTPase superfamily. EngB GTPase family. It depends on Mg(2+) as a cofactor.

Its function is as follows. Necessary for normal cell division and for the maintenance of normal septation. This chain is Probable GTP-binding protein EngB, found in Mesoplasma florum (strain ATCC 33453 / NBRC 100688 / NCTC 11704 / L1) (Acholeplasma florum).